Consider the following 428-residue polypeptide: Adenylosuccinate synthetase (428 aa).

Residues 12-18 (GDEGKGK) and 40-42 (GHT) contribute to the GTP site. Catalysis depends on Asp13, which acts as the Proton acceptor. Asp13 and Gly40 together coordinate Mg(2+). IMP contacts are provided by residues 13–16 (DEGK), 38–41 (NAGH), Thr130, Arg144, Gln225, Thr240, and Arg304. Residue His41 is the Proton donor of the active site. 300–306 (VTTGRAR) is a binding site for substrate. Residues Arg306, 332 to 334 (KID), and 414 to 416 (SVG) contribute to the GTP site.

Belongs to the adenylosuccinate synthetase family. As to quaternary structure, homodimer. Requires Mg(2+) as cofactor.

Its subcellular location is the cytoplasm. It catalyses the reaction IMP + L-aspartate + GTP = N(6)-(1,2-dicarboxyethyl)-AMP + GDP + phosphate + 2 H(+). The protein operates within purine metabolism; AMP biosynthesis via de novo pathway; AMP from IMP: step 1/2. Functionally, plays an important role in the de novo pathway of purine nucleotide biosynthesis. Catalyzes the first committed step in the biosynthesis of AMP from IMP. This chain is Adenylosuccinate synthetase, found in Clostridium botulinum (strain ATCC 19397 / Type A).